The sequence spans 286 residues: NADH-cytochrome b5 reductase 1 (286 aa).

The helical transmembrane segment at Phe6 to Leu26 threads the bilayer. Positions Gln52 to Gln155 constitute an FAD-binding FR-type domain. FAD-binding positions include Asp135 to Gly150 and Ser161 to Leu193.

The protein belongs to the flavoprotein pyridine nucleotide cytochrome reductase family. Monomer. FAD serves as cofactor.

It localises to the endoplasmic reticulum membrane. The protein resides in the mitochondrion outer membrane. The catalysed reaction is 2 Fe(III)-[cytochrome b5] + NADH = 2 Fe(II)-[cytochrome b5] + NAD(+) + H(+). In terms of biological role, electron donor reductase for cytochrome b5. The cytochrome b5/NADH cytochrome b5 reductase electron transfer system supports the catalytic activity of several sterol biosynthetic enzymes. This chain is NADH-cytochrome b5 reductase 1 (cyb5r1), found in Dictyostelium discoideum (Social amoeba).